Reading from the N-terminus, the 730-residue chain is Denticleless protein homolog (730 aa).

Position 1 is an N-acetylmethionine (Met-1). WD repeat units follow at residues 47-89, 96-135, and 138-178; these read GVPV…FRKK, AHWN…LIGT, and GHQC…KDGF. The short motif at 168 to 171 is the DDB1-binding motif element; that stretch reads WDTR. Over residues 188–198 the composition is skewed to polar residues; that stretch reads AHNTSDKQTPS. The tract at residues 188-210 is disordered; the sequence is AHNTSDKQTPSKPKKKQNSKGLA. Thr-196 is modified (phosphothreonine). The short motif at 197 to 203 is the Nuclear localization signal element; that stretch reads PSKPKKK. 4 WD repeats span residues 214-253, 267-308, 313-354, and 358-398; these read DFQQ…TAYR, SSTR…TSPV, GHQN…QPPT, and GHSQ…EEKP. Positions 243 to 246 match the DDB1-binding motif motif; it reads WDLR. Residues 399–443 are disordered; sequence GGDKLSTVGWASQKKKESRPGLVTVTSSQSTPAKAPRAKCNPSNS. Phosphoserine is present on residues Ser-410 and Ser-426. Residue Thr-464 is modified to Phosphothreonine; by CDK1 and CDK2. The segment at 465 to 498 is disordered; sequence PTFSIKTSPAKARSPINRRGSVSSVSPKPPSSFK. Residues Ser-485, Ser-490, Ser-495, and Ser-512 each carry the phosphoserine modification. Position 516 is a phosphothreonine (Thr-516). Ser-557 is modified (phosphoserine). 2 disordered regions span residues 599-631 and 644-703; these read SKDS…YASE and GEGS…TITP. Phosphoserine is present on residues Ser-676 and Ser-679. A compositionally biased stretch (polar residues) spans 679–689; sequence SPSSQTPNSRR. Phosphothreonine is present on residues Thr-684 and Thr-702. Residue Ser-717 is modified to Phosphoserine.

It belongs to the WD repeat cdt2 family. Component of the DCX(DTL) E3 ubiquitin ligase complex (also called CRL4(CDT2)), at least composed of CUL4 (CUL4A or CUL4B), DDB1, DTL/CDT2 and RBX1. Interacts with CDKN1A. Interacts with DDB1. Interacts with FBXO11; SCF(FBXWO11) controls DTL stability but DCX(DTL) does not control FBXO11 stability. Interacts with CRY1. Ubiquitinated by the anaphase promoting complex/cyclosome (APC/C). Autoubiquitinated through 'Lys-48'-polyubiquitin chains in a PCNA-independent reaction, allowing proteasomal turnover. Polyubiquitinated by SCF(FBXO11) when not phosphorylated, leading to its degradation. A tight regulation of the polyubiquitination by SCF(FBXO11) is involved in the control of different processes such as TGF-beta signaling, cell cycle progression and exit. Post-translationally, phosphorylated at Thr-464 by CDK1/Cyclin-B and CDK2/Cyclin-A but not by CDK2/Cyclin-E, MAPK1 or PLK1. Phosphorylation at Thr-464 inhibits the interaction with FBXO11 and decreases upon cell cycle exit induced by TGF-beta or serum starvation. As to expression, expressed in placenta and testis, very low expression seen in skeletal muscle. Detected in all hematopoietic tissues examined, with highest expression in thymus and bone marrow. A low level detected in the spleen and lymph node, and barely detectable level in the peripheral leukocytes. RA treatment down-regulated the expression in NT2 cell.

It is found in the nucleus. It localises to the nucleus membrane. The protein localises to the cytoplasm. Its subcellular location is the cytoskeleton. The protein resides in the microtubule organizing center. It is found in the centrosome. It localises to the chromosome. It participates in protein modification; protein ubiquitination. In terms of biological role, substrate-specific adapter of a DCX (DDB1-CUL4-X-box) E3 ubiquitin-protein ligase complex required for cell cycle control, DNA damage response and translesion DNA synthesis. The DCX(DTL) complex, also named CRL4(CDT2) complex, mediates the polyubiquitination and subsequent degradation of CDT1, CDKN1A/p21(CIP1), FBH1, KMT5A and SDE2. CDT1 degradation in response to DNA damage is necessary to ensure proper cell cycle regulation of DNA replication. CDKN1A/p21(CIP1) degradation during S phase or following UV irradiation is essential to control replication licensing. KMT5A degradation is also important for a proper regulation of mechanisms such as TGF-beta signaling, cell cycle progression, DNA repair and cell migration. Most substrates require their interaction with PCNA for their polyubiquitination: substrates interact with PCNA via their PIP-box, and those containing the 'K+4' motif in the PIP box, recruit the DCX(DTL) complex, leading to their degradation. In undamaged proliferating cells, the DCX(DTL) complex also promotes the 'Lys-164' monoubiquitination of PCNA, thereby being involved in PCNA-dependent translesion DNA synthesis. The DDB1-CUL4A-DTL E3 ligase complex regulates the circadian clock function by mediating the ubiquitination and degradation of CRY1. This is Denticleless protein homolog (DTL) from Homo sapiens (Human).